The following is a 497-amino-acid chain: Casein kinase I isoform delta (497 aa).

2 disordered regions span residues 1 to 58 and 86 to 109; these read MATM…EEMN and PIQQ…HPTQ. Residues 14 to 34 are compositionally biased toward polar residues; it reads WHNNTSTPMDTTEPATNSHNP. Over residues 88 to 105 the composition is skewed to low complexity; sequence QQHQQPPLLQQAQPSQIP. Residues 191–458 enclose the Protein kinase domain; it reads FRLGRKIGSG…YLRNLFRTLF (268 aa). ATP contacts are provided by residues 197–205 and Lys-220; that span reads IGSGSFGDI. The active-site Proton acceptor is Asp-310.

The protein belongs to the protein kinase superfamily. CK1 Ser/Thr protein kinase family. Casein kinase I subfamily. In terms of assembly, monomer. In terms of tissue distribution, expressed throughout larval development and into the adult stage in both hypodermal seam cells and the hermaphrodite specific neuron.

The protein resides in the cytoplasm. It is found in the nucleus. The protein localises to the chromosome. Its subcellular location is the centromere. It localises to the cell junction. The protein resides in the adherens junction. It carries out the reaction L-seryl-[protein] + ATP = O-phospho-L-seryl-[protein] + ADP + H(+). The catalysed reaction is L-threonyl-[protein] + ATP = O-phospho-L-threonyl-[protein] + ADP + H(+). Exhibits substrate-dependent heparin activation. Functionally, essential serine/threonine-protein kinase that regulates diverse cellular growth and survival processes including Wnt signaling, DNA repair and circadian rhythms. Casein kinases are operationally defined by their preferential utilization of acidic proteins. Positively regulates the expression of components of the heterochronic pathway, which regulate developmental timing, such as the transcriptional repressor lin-42 and microRNAs such as let-7. Negatively regulates cell cycle exit and cell fusion to prevent the premature differentiation of hypodermal seam cells into adult cells. Plays a role in regulating axon branching and subsequently, the maturation of the nervous system, most likely by preventing the premature termination of transcripts for proteins such as Ankyrin/unc-44, which are required for maintaining the nervous system. May phosphorylate ssup-72 to promote nervous system maturation. The polypeptide is Casein kinase I isoform delta (Caenorhabditis elegans).